A 449-amino-acid polypeptide reads, in one-letter code: Glucose-6-phosphate isomerase (449 aa).

The Proton donor role is filled by E291. Catalysis depends on residues H312 and K426.

This sequence belongs to the GPI family.

The protein resides in the cytoplasm. It carries out the reaction alpha-D-glucose 6-phosphate = beta-D-fructose 6-phosphate. The protein operates within carbohydrate biosynthesis; gluconeogenesis. It participates in carbohydrate degradation; glycolysis; D-glyceraldehyde 3-phosphate and glycerone phosphate from D-glucose: step 2/4. In terms of biological role, catalyzes the reversible isomerization of glucose-6-phosphate to fructose-6-phosphate. The chain is Glucose-6-phosphate isomerase from Streptococcus mutans serotype c (strain ATCC 700610 / UA159).